A 342-amino-acid chain; its full sequence is Phosphoribosylformylglycinamidine cyclo-ligase (342 aa).

Belongs to the AIR synthase family.

The protein localises to the cytoplasm. The enzyme catalyses 2-formamido-N(1)-(5-O-phospho-beta-D-ribosyl)acetamidine + ATP = 5-amino-1-(5-phospho-beta-D-ribosyl)imidazole + ADP + phosphate + H(+). It functions in the pathway purine metabolism; IMP biosynthesis via de novo pathway; 5-amino-1-(5-phospho-D-ribosyl)imidazole from N(2)-formyl-N(1)-(5-phospho-D-ribosyl)glycinamide: step 2/2. The polypeptide is Phosphoribosylformylglycinamidine cyclo-ligase (Gloeothece citriformis (strain PCC 7424) (Cyanothece sp. (strain PCC 7424))).